Here is a 169-residue protein sequence, read N- to C-terminus: 2-C-methyl-D-erythritol 2,4-cyclodiphosphate synthase (169 aa).

Positions 13 and 15 each coordinate a divalent metal cation. 4-CDP-2-C-methyl-D-erythritol 2-phosphate is bound by residues 13–15 and 39–40; these read DVH and HS. Residue His47 participates in a divalent metal cation binding. 4-CDP-2-C-methyl-D-erythritol 2-phosphate is bound by residues 61–63, 66–70, Phe144, and Arg147; these read DIG and FPDTD.

Belongs to the IspF family. Homotrimer. A divalent metal cation is required as a cofactor.

It carries out the reaction 4-CDP-2-C-methyl-D-erythritol 2-phosphate = 2-C-methyl-D-erythritol 2,4-cyclic diphosphate + CMP. The protein operates within isoprenoid biosynthesis; isopentenyl diphosphate biosynthesis via DXP pathway; isopentenyl diphosphate from 1-deoxy-D-xylulose 5-phosphate: step 4/6. Its function is as follows. Involved in the biosynthesis of isopentenyl diphosphate (IPP) and dimethylallyl diphosphate (DMAPP), two major building blocks of isoprenoid compounds. Catalyzes the conversion of 4-diphosphocytidyl-2-C-methyl-D-erythritol 2-phosphate (CDP-ME2P) to 2-C-methyl-D-erythritol 2,4-cyclodiphosphate (ME-CPP) with a corresponding release of cytidine 5-monophosphate (CMP). The polypeptide is 2-C-methyl-D-erythritol 2,4-cyclodiphosphate synthase (Cupriavidus pinatubonensis (strain JMP 134 / LMG 1197) (Cupriavidus necator (strain JMP 134))).